The sequence spans 630 residues: Protein phosphatase 2C-like domain-containing protein 1 (630 aa).

Residues 170–621 (GVGICEDRNS…DNITVMVIFL (452 aa)) form the PPM-type phosphatase domain. A compositionally biased stretch (basic and acidic residues) spans 557 to 569 (TTHRKPCSEKVTD). The segment at 557–578 (TTHRKPCSEKVTDRPTSVNDVA) is disordered.

The protein belongs to the PP2C family.

This is Protein phosphatase 2C-like domain-containing protein 1 (PP2D1) from Homo sapiens (Human).